The primary structure comprises 515 residues: MQIEMEEKFEDWRGKEAISGKHGGIKAAFIACVVETMENMVFLACSTNFMMYFTKSMNYSTPKAATMVTNFVGTSFLLTIFGGFVADSFLTRFAAFVLFGSIELLGLIMLTLQAHITKLQPQGGKKPSTPQSTVLFTGLYAIAIGVGGVKGSLPAHGGDQIGTRNQRLISGFFNWYFFSVCLGGFLAVTLMVWIEENIGWSSSFTISTAVLASAIFVFVAGCPMYRFKRPAGSPLTRIVNVFVSAARNRNRFVTDAEVVTQNHNSTDKSIHHNKFKFLNKAKLNNKISATQVEETRTFLALLPIFGSTIIMNCCVAQMGTFSVQQGMVTNRKLSRSFEIPVASLNAIPLLCMLSSLALYELFGKRILSNSERSSSFNLKRIGYGLALTSISMAVAAIVEVKRKHEAVHNNIKISVFWLELQFVMLSLSDMLTVGGMLEFFFRESPASMRSMSTALGWCSTAMGFFLSSVLVEVVNGITGWLRDDLNESRLELFYLVLCVLNTLNLFNYIFWAKRY.

Helical transmembrane passes span 24–44, 71–91, 93–113, 134–154, 168–188, 204–224, 298–318, 339–359, 381–401, 413–433, 461–481, and 492–512; these read GIKA…VFLA, FVGT…SFLT, FAAF…LTLQ, VLFT…GSLP, LISG…FLAV, FTIS…GCPM, FLAL…VAQM, IPVA…LALY, IGYG…VEVK, ISVF…MLTV, AMGF…TGWL, and LFYL…IFWA.

The protein belongs to the major facilitator superfamily. Proton-dependent oligopeptide transporter (POT/PTR) (TC 2.A.17) family. In terms of tissue distribution, expressed in siliques and flowers.

Its subcellular location is the membrane. In terms of biological role, involved in (+) and (-)-abscisic acid transport (ABA) and in gibberellin import. The chain is Protein NRT1/ PTR FAMILY 4.1 (NPF4.1) from Arabidopsis thaliana (Mouse-ear cress).